A 223-amino-acid polypeptide reads, in one-letter code: UPF0441 protein YgiB (223 aa).

The span at Thr-178–Thr-195 shows a compositional bias: low complexity. Residues Thr-178 to Gly-223 are disordered. Over residues Ala-204 to Gly-223 the composition is skewed to polar residues.

The protein belongs to the UPF0441 family.

The protein is UPF0441 protein YgiB of Shigella flexneri serotype 5b (strain 8401).